The sequence spans 274 residues: Undecaprenyl-diphosphatase (274 aa).

The next 8 helical transmembrane spans lie at Leu-9 to Val-29, Pro-47 to Phe-67, Ile-95 to Tyr-115, Val-120 to Leu-140, Leu-161 to Ile-181, Phe-197 to Ser-217, Leu-224 to Ile-244, and Asn-254 to Leu-274.

Belongs to the UppP family.

Its subcellular location is the cell inner membrane. The enzyme catalyses di-trans,octa-cis-undecaprenyl diphosphate + H2O = di-trans,octa-cis-undecaprenyl phosphate + phosphate + H(+). Catalyzes the dephosphorylation of undecaprenyl diphosphate (UPP). Confers resistance to bacitracin. This chain is Undecaprenyl-diphosphatase, found in Prochlorococcus marinus (strain AS9601).